A 488-amino-acid polypeptide reads, in one-letter code: Glycogen synthase (488 aa).

Lysine 16 is a binding site for ADP-alpha-D-glucose.

It belongs to the glycosyltransferase 1 family. Bacterial/plant glycogen synthase subfamily.

It carries out the reaction [(1-&gt;4)-alpha-D-glucosyl](n) + ADP-alpha-D-glucose = [(1-&gt;4)-alpha-D-glucosyl](n+1) + ADP + H(+). It functions in the pathway glycan biosynthesis; glycogen biosynthesis. In terms of biological role, synthesizes alpha-1,4-glucan chains using ADP-glucose. The sequence is that of Glycogen synthase from Marinobacter nauticus (strain ATCC 700491 / DSM 11845 / VT8) (Marinobacter aquaeolei).